The chain runs to 103 residues: MYAVIKTGGKQYKVAAGEKIKVEQIAAEVGQEIVIDQVLALGSGADLKIGTPLVEGATVTATVLAQGRHDKVRIFKMRRRKHYQKRQGHRQNFTELQISAVLG.

The protein belongs to the bacterial ribosomal protein bL21 family. Part of the 50S ribosomal subunit. Contacts protein L20.

Its function is as follows. This protein binds to 23S rRNA in the presence of protein L20. This is Large ribosomal subunit protein bL21 from Leptothrix cholodnii (strain ATCC 51168 / LMG 8142 / SP-6) (Leptothrix discophora (strain SP-6)).